The chain runs to 128 residues: Small ribosomal subunit protein uS13 (128 aa).

The interval 98–128 (VRGQRTRTNARTRKGPRPRIGVKKKGKQAGS) is disordered. A compositionally biased stretch (basic residues) spans 101–128 (QRTRTNARTRKGPRPRIGVKKKGKQAGS).

The protein belongs to the universal ribosomal protein uS13 family. Part of the 30S ribosomal subunit. Forms a loose heterodimer with protein S19. Forms two bridges to the 50S subunit in the 70S ribosome.

In terms of biological role, located at the top of the head of the 30S subunit, it contacts several helices of the 16S rRNA. In the 70S ribosome it contacts the 23S rRNA (bridge B1a) and protein L5 of the 50S subunit (bridge B1b), connecting the 2 subunits; these bridges are implicated in subunit movement. Contacts the tRNAs in the A and P-sites. The protein is Small ribosomal subunit protein uS13 of Thermomicrobium roseum (strain ATCC 27502 / DSM 5159 / P-2).